Consider the following 47-residue polypeptide: Ruminococcin-A (47 aa).

A signal peptide spans 1-23 (MRNDVLTLTNPMEEKELEQILGG). 2,3-didehydrobutyrine occurs at positions 30 and 39. A cross-link (beta-methyllanthionine (Thr-Cys)) is located at residues 30–35 (TISHEC). The segment at residues 32-46 (SHECNMNTWQFLFTC) is a cross-link (lanthionine (Ser-Cys)). Positions 45 to 47 (TCC) form a cross-link, beta-methyllanthionine (Thr-Cys).

Maturation of lantibiotics involves the enzymatic conversion of Thr, and Ser into dehydrated AA and the formation of thioether bonds with cysteine. This is followed by membrane translocation and cleavage of the modified precursor. In terms of processing, it is not established whether the 2,3-didehydrobutyrine is the E- or Z-isomer.

The protein resides in the secreted. Its function is as follows. Lanthionine-containing peptide antibiotic (lantibiotic) active on Gram-positive bacteria. The bactericidal activity of lantibiotics is based on depolarization of energized bacterial cytoplasmic membranes, initiated by the formation of aqueous transmembrane pores. Ruminococcin A is a broad spectrum bacteriocin exhibiting activity against a wide range of pathogenic clostridia and B.longum. This chain is Ruminococcin-A (rumA1), found in Mediterraneibacter gnavus (Ruminococcus gnavus).